We begin with the raw amino-acid sequence, 377 residues long: Chaperone protein DnaJ (377 aa).

Positions 4 to 69 (DYYEALGVER…QKRAAYDRFG (66 aa)) constitute a J domain. The CR-type zinc-finger motif lies at 135 to 213 (GKTAQIRVPT…CHGQGRVTQE (79 aa)). Positions 148, 151, 165, 168, 187, 190, 201, and 204 each coordinate Zn(2+). 4 CXXCXGXG motif repeats span residues 148 to 155 (CDECSGSG), 165 to 172 (CTMCSGSG), 187 to 194 (CPTCNGRG), and 201 to 208 (CGKCHGQG).

The protein belongs to the DnaJ family. As to quaternary structure, homodimer. Requires Zn(2+) as cofactor.

It is found in the cytoplasm. In terms of biological role, participates actively in the response to hyperosmotic and heat shock by preventing the aggregation of stress-denatured proteins and by disaggregating proteins, also in an autonomous, DnaK-independent fashion. Unfolded proteins bind initially to DnaJ; upon interaction with the DnaJ-bound protein, DnaK hydrolyzes its bound ATP, resulting in the formation of a stable complex. GrpE releases ADP from DnaK; ATP binding to DnaK triggers the release of the substrate protein, thus completing the reaction cycle. Several rounds of ATP-dependent interactions between DnaJ, DnaK and GrpE are required for fully efficient folding. Also involved, together with DnaK and GrpE, in the DNA replication of plasmids through activation of initiation proteins. This is Chaperone protein DnaJ from Brucella anthropi (strain ATCC 49188 / DSM 6882 / CCUG 24695 / JCM 21032 / LMG 3331 / NBRC 15819 / NCTC 12168 / Alc 37) (Ochrobactrum anthropi).